Consider the following 213-residue polypeptide: Pyrrolidone-carboxylate peptidase (213 aa).

Residues E81, C144, and H166 contribute to the active site.

Belongs to the peptidase C15 family. Homodimer.

The protein localises to the cytoplasm. The catalysed reaction is Release of an N-terminal pyroglutamyl group from a polypeptide, the second amino acid generally not being Pro.. Removes 5-oxoproline from various penultimate amino acid residues except L-proline. This Pseudomonas fluorescens protein is Pyrrolidone-carboxylate peptidase (pcp).